A 568-amino-acid chain; its full sequence is 2-succinyl-5-enolpyruvyl-6-hydroxy-3-cyclohexene-1-carboxylate synthase (568 aa).

It belongs to the TPP enzyme family. MenD subfamily. In terms of assembly, homodimer. Requires Mg(2+) as cofactor. Mn(2+) is required as a cofactor. Thiamine diphosphate serves as cofactor.

It carries out the reaction isochorismate + 2-oxoglutarate + H(+) = 5-enolpyruvoyl-6-hydroxy-2-succinyl-cyclohex-3-ene-1-carboxylate + CO2. The protein operates within quinol/quinone metabolism; 1,4-dihydroxy-2-naphthoate biosynthesis; 1,4-dihydroxy-2-naphthoate from chorismate: step 2/7. It participates in quinol/quinone metabolism; menaquinone biosynthesis. Catalyzes the thiamine diphosphate-dependent decarboxylation of 2-oxoglutarate and the subsequent addition of the resulting succinic semialdehyde-thiamine pyrophosphate anion to isochorismate to yield 2-succinyl-5-enolpyruvyl-6-hydroxy-3-cyclohexene-1-carboxylate (SEPHCHC). The polypeptide is 2-succinyl-5-enolpyruvyl-6-hydroxy-3-cyclohexene-1-carboxylate synthase (Actinobacillus pleuropneumoniae serotype 7 (strain AP76)).